A 264-amino-acid polypeptide reads, in one-letter code: Electron transfer flavoprotein subunit beta (264 aa).

AMP is bound by residues alanine 6, 36–39, valine 64, 119–122, and 127–130; these read NEWD, GVQS, and YAST.

In terms of assembly, heterodimer of an alpha and a beta subunit. Forms a ternary complex with trimethylamine dehydrogenase.

Functionally, heterodimeric electron transfer flavoprotein that accepts electrons from trimethylamine dehydrogenase. It transfers the electrons to the main respiratory chain via ETF-ubiquinone oxidoreductase (ETF dehydrogenase). EtfB binds an AMP molecule that probably has a purely structural role. This Methylophilus methylotrophus (Bacterium W3A1) protein is Electron transfer flavoprotein subunit beta (etfB).